The primary structure comprises 78 residues: uncharacterized protein (78 aa).

The chain crosses the membrane as a helical span at residues 44–66 (ALYSLGFFLCTTIVIFSNIKFVV).

This sequence belongs to the TatC family.

Its subcellular location is the plastid. It is found in the chloroplast membrane. This is an uncharacterized protein from Dictyota dichotoma.